The primary structure comprises 795 residues: Delta-1-pyrroline-5-carboxylate synthase (795 aa).

The segment at 1–361 is glutamate 5-kinase; it reads MLRHMHRSGV…FFSEVKPAGP (361 aa). Ser-117, Asp-223, and Asn-246 together coordinate substrate. Residues 266-267 and 305-311 contribute to the ATP site; these read SD and LGGMEAK. Lys-311, Lys-347, and Lys-550 each carry N6-succinyllysine. A gamma-glutamyl phosphate reductase region spans residues 362 to 795; the sequence is TVEQQGEMAR…NLPVPQRNFS (434 aa).

It in the N-terminal section; belongs to the glutamate 5-kinase family. In the C-terminal section; belongs to the gamma-glutamyl phosphate reductase family. In terms of assembly, can form homodimers/multimers.

It is found in the mitochondrion matrix. It catalyses the reaction L-glutamate + ATP = L-glutamyl 5-phosphate + ADP. The catalysed reaction is L-glutamate 5-semialdehyde + phosphate + NADP(+) = L-glutamyl 5-phosphate + NADPH + H(+). Its pathway is amino-acid biosynthesis; L-proline biosynthesis; L-glutamate 5-semialdehyde from L-glutamate: step 1/2. It participates in amino-acid biosynthesis; L-proline biosynthesis; L-glutamate 5-semialdehyde from L-glutamate: step 2/2. Its activity is regulated as follows. Isoform Short: Inhibited by L-ornithine with a Ki of approximately 0.25 mm. Isoform Long: Insensitive to ornithine inhibition. Thus, the two amino acid insert in the long isoform abolishes feedback inhibition of P5CS activity by L-ornithine. Its function is as follows. Bifunctional enzyme that converts glutamate to glutamate 5-semialdehyde, an intermediate in the biosynthesis of proline, ornithine and arginine. This Mus musculus (Mouse) protein is Delta-1-pyrroline-5-carboxylate synthase (Aldh18a1).